A 504-amino-acid polypeptide reads, in one-letter code: Cobyric acid synthase (504 aa).

The region spanning 251–448 (DITIAIVQLP…LHGLFDSDAF (198 aa)) is the GATase cobBQ-type domain. Residue Cys332 is the Nucleophile of the active site. His440 is an active-site residue.

The protein belongs to the CobB/CobQ family. CobQ subfamily.

The protein operates within cofactor biosynthesis; adenosylcobalamin biosynthesis. In terms of biological role, catalyzes amidations at positions B, D, E, and G on adenosylcobyrinic A,C-diamide. NH(2) groups are provided by glutamine, and one molecule of ATP is hydrogenolyzed for each amidation. The chain is Cobyric acid synthase from Salmonella gallinarum (strain 287/91 / NCTC 13346).